Reading from the N-terminus, the 366-residue chain is Quinolinate synthase (366 aa).

Iminosuccinate contacts are provided by His44 and Ser61. Cys108 is a [4Fe-4S] cluster binding site. Iminosuccinate-binding positions include 139 to 141 (YIN) and Ser160. Cys228 contacts [4Fe-4S] cluster. Iminosuccinate is bound by residues 254-256 (HPE) and Thr271. Cys318 lines the [4Fe-4S] cluster pocket.

This sequence belongs to the quinolinate synthase family. Type 3 subfamily. It depends on [4Fe-4S] cluster as a cofactor.

It is found in the cytoplasm. It catalyses the reaction iminosuccinate + dihydroxyacetone phosphate = quinolinate + phosphate + 2 H2O + H(+). Its pathway is cofactor biosynthesis; NAD(+) biosynthesis; quinolinate from iminoaspartate: step 1/1. In terms of biological role, catalyzes the condensation of iminoaspartate with dihydroxyacetone phosphate to form quinolinate. This chain is Quinolinate synthase, found in Listeria innocua serovar 6a (strain ATCC BAA-680 / CLIP 11262).